A 275-amino-acid polypeptide reads, in one-letter code: Putative carbamate hydrolase RutD (275 aa).

It belongs to the AB hydrolase superfamily. Hydrolase RutD family.

It catalyses the reaction carbamate + 2 H(+) = NH4(+) + CO2. Its function is as follows. Involved in pyrimidine catabolism. May facilitate the hydrolysis of carbamate, a reaction that can also occur spontaneously. The protein is Putative carbamate hydrolase RutD of Escherichia coli (strain UTI89 / UPEC).